We begin with the raw amino-acid sequence, 343 residues long: Large ribosomal subunit protein uL3 (343 aa).

2 disordered regions span residues 1 to 31 (MGHRKLASPRRGSAGVRPRKRASEILPTPRS) and 238 to 262 (KGSRKVGARGPSFSTPSYVPQPGQM).

The protein belongs to the universal ribosomal protein uL3 family. Part of the 50S ribosomal subunit. Forms a cluster with proteins L14 and L24e.

One of the primary rRNA binding proteins, it binds directly near the 3'-end of the 23S rRNA, where it nucleates assembly of the 50S subunit. The chain is Large ribosomal subunit protein uL3 from Sulfurisphaera tokodaii (strain DSM 16993 / JCM 10545 / NBRC 100140 / 7) (Sulfolobus tokodaii).